The chain runs to 280 residues: Ribosomal RNA small subunit methyltransferase A (280 aa).

The S-adenosyl-L-methionine site is built by His-15, Leu-17, Gly-42, Glu-64, Asp-89, and Asn-109.

The protein belongs to the class I-like SAM-binding methyltransferase superfamily. rRNA adenine N(6)-methyltransferase family. RsmA subfamily.

It is found in the cytoplasm. It carries out the reaction adenosine(1518)/adenosine(1519) in 16S rRNA + 4 S-adenosyl-L-methionine = N(6)-dimethyladenosine(1518)/N(6)-dimethyladenosine(1519) in 16S rRNA + 4 S-adenosyl-L-homocysteine + 4 H(+). Specifically dimethylates two adjacent adenosines (A1518 and A1519) in the loop of a conserved hairpin near the 3'-end of 16S rRNA in the 30S particle. May play a critical role in biogenesis of 30S subunits. This Synechococcus sp. (strain WH7803) protein is Ribosomal RNA small subunit methyltransferase A.